Reading from the N-terminus, the 108-residue chain is UPF0145 protein LGAS_1099 (108 aa).

This sequence belongs to the UPF0145 family.

In Lactobacillus gasseri (strain ATCC 33323 / DSM 20243 / BCRC 14619 / CIP 102991 / JCM 1131 / KCTC 3163 / NCIMB 11718 / NCTC 13722 / AM63), this protein is UPF0145 protein LGAS_1099.